Here is a 164-residue protein sequence, read N- to C-terminus: Disulfide bond formation protein B (164 aa).

Over 1–9 the chain is Cytoplasmic; that stretch reads MTLPSARTC. Residues 10-26 traverse the membrane as a helical segment; that stretch reads FLLGFLFCAALLAAALY. The Periplasmic portion of the chain corresponds to 27-44; that stretch reads FQFSGGLEPCPLCISQRI. A disulfide bridge connects residues C36 and C39. The chain crosses the membrane as a helical span at residues 45-61; the sequence is MVLAVALVFLAAAIHHP. At 62 to 68 the chain is on the cytoplasmic side; the sequence is ASLGIRA. A helical membrane pass occupies residues 69–85; it reads YALLGTAVALGGASISG. Residues 86–142 lie on the Periplasmic side of the membrane; that stretch reads RHVWLLHLPPEEVPECGPGLSYMFRNFPLGDTLKAMLSGTGDCAKVDWTFLGLSMPA. A disulfide bond links C101 and C128. Residues 143 to 161 form a helical membrane-spanning segment; the sequence is WVLICFLGLGAFSLLQWWN. Over 162-164 the chain is Cytoplasmic; it reads AER.

Belongs to the DsbB family.

It localises to the cell inner membrane. Required for disulfide bond formation in some periplasmic proteins. Acts by oxidizing the DsbA protein. In Methylococcus capsulatus (strain ATCC 33009 / NCIMB 11132 / Bath), this protein is Disulfide bond formation protein B.